Reading from the N-terminus, the 84-residue chain is Delta-thalatoxin-Cad1a (84 aa).

A signal peptide spans 1–19; that stretch reads MAYLKIVLVALMLVLAVSA. A propeptide spanning residues 20–33 is cleaved from the precursor; that stretch reads MRRPDQQDQDISVA. Cystine bridges form between Cys-38–Cys-78, Cys-40–Cys-68, and Cys-61–Cys-79.

It belongs to the sea anemone sodium channel inhibitory toxin family. Type II subfamily.

The protein resides in the secreted. It is found in the nematocyst. In terms of biological role, binds specifically to the voltage-gated sodium channel (Nav) and delays its inactivation. In Cryptodendrum adhaesivum (Adhesive sea anemone), this protein is Delta-thalatoxin-Cad1a.